We begin with the raw amino-acid sequence, 537 residues long: Zinc metalloproteinase nas-23 (537 aa).

A signal peptide spans 1–16 (MRFLILVLAGSIGIYG). The propeptide occupies 17 to 111 (VNLPKIPKLS…EQLDHSRTKR (95 aa)). Residue asparagine 77 is glycosylated (N-linked (GlcNAc...) asparagine). One can recognise a Peptidase M12A domain in the interval 116–311 (NAMYPKTIWL…AKINRHYNCE (196 aa)). 6 disulfides stabilise this stretch: cysteine 156–cysteine 310, cysteine 178–cysteine 199, cysteine 314–cysteine 334, cysteine 336–cysteine 345, cysteine 356–cysteine 385, and cysteine 412–cysteine 433. A Zn(2+)-binding site is contributed by histidine 207. Glutamate 208 is a catalytic residue. Residues histidine 211 and histidine 217 each coordinate Zn(2+). The EGF-like domain maps to 306–346 (RHYNCEKNCKNKITCLNGGYQHPKNCKICVCPPGYGGSDCK). The CUB domain occupies 356 to 471 (CTGVLVAGET…VQLRYSTVDG (116 aa)). Asparagine 481 carries N-linked (GlcNAc...) asparagine glycosylation.

The cofactor is Zn(2+). As to expression, expressed in the hypodermis, rectum and to a lesser extent in pharyngeal muscles and intestine.

Its subcellular location is the secreted. Metalloprotease. The protein is Zinc metalloproteinase nas-23 (nas-23) of Caenorhabditis elegans.